A 532-amino-acid polypeptide reads, in one-letter code: Cyclin-L1 (532 aa).

Cyclin-like stretches follow at residues 94–196 (ELIQ…RVLK) and 209–293 (KIIV…ETLR). Thr-331 carries the post-translational modification Phosphothreonine. Residues 332–532 (PALSTLGGFS…SRSGHGRHRR (201 aa)) form a disordered region. Ser-341 and Ser-344 each carry phosphoserine. Glycyl lysine isopeptide (Lys-Gly) (interchain with G-Cter in SUMO2) cross-links involve residues Lys-345 and Lys-353. Residues 348-358 (SPREVKAEEKS) show a composition bias toward basic and acidic residues. Phosphoserine occurs at positions 358 and 361. Residues 367 to 376 (VKKEPEDRQQ) show a composition bias toward basic and acidic residues. Lys-368 is covalently cross-linked (Glycyl lysine isopeptide (Lys-Gly) (interchain with G-Cter in SUMO2)). A Phosphoserine modification is found at Ser-380. Composition is skewed to basic residues over residues 388–424 (DSKR…RRSR), 444–458 (RRHH…KAKH), 466–482 (SNRH…RSQS), and 492–504 (KKHR…HRDR). The RS stretch occupies residues 396–438 (RSASRSRSRTRSRSRSHSPRRHYNNRRSRSGTYSSRSRSRSRS). The residue at position 451 (Ser-451) is a Phosphoserine. Residues 505–514 (RERSRSFERS) show a composition bias toward basic and acidic residues. Residues 515-532 (HKGKHHGGSRSGHGRHRR) are compositionally biased toward basic residues.

Belongs to the cyclin family. Cyclin L subfamily. Interacts with POLR2A via its hyperphosphorylated C-terminal domain (CTD). Interacts with CDK11A, CDK11B, CDK12 and CDK13. May form a ternary complex with CDK11B and casein kinase II (CKII). Interacts with pre-mRNA-splicing factors, including at least SRSF1, SRSF2 and SRSF7/SLU7. In terms of tissue distribution, widely expressed (at protein level).

It is found in the nucleus speckle. Its subcellular location is the nucleus. It localises to the nucleoplasm. The protein localises to the cytoplasm. Involved in pre-mRNA splicing. Functions in association with cyclin-dependent kinases (CDKs). May play a role in the regulation of RNA polymerase II (pol II). Inhibited by the CDK-specific inhibitor CDKN1A/p21. The chain is Cyclin-L1 (Ccnl1) from Mus musculus (Mouse).